A 1196-amino-acid chain; its full sequence is Protein BRASSINOSTEROID INSENSITIVE 1 (1196 aa).

The signal sequence occupies residues 1–23; that stretch reads MKTFSSFFLSVTTLFFFSFFSLS. Residues 62-69 carry the Cys pair 1 motif; that stretch reads CTFDGVTC. LRR repeat units lie at residues 71-98, 99-121, 122-146, 148-169, 172-197, 199-221, 222-244, 245-268, 269-290, 291-314, 316-338, 339-363, 364-388, 390-413, 415-439, 441-463, 464-487, 488-511, 513-535, 536-559, and 561-583; these read DDKVTSIDLSSKPLNVGFSAVSSSLLSL, TGLESLFLSNSHINGSVSGFKCS, ASLTSLDLSRNSLSGPVTTLTSLGS, SGLKFLNVSSNTLDFPGKVSGG, LNSLEVLDLSANSISGANVVGWVLSD, CGELKHLAISGNKISGDVDVSRC, VNLEFLDVSSNNFSTGIPFLGDC, SALQHLDISGNKLSGDFSRAISTC, TELKLLNISSNQFVGPIPPLPL, KSLQYLSLAENKFTGEIPDFLSGA, DTLTGLDLSGNHFYGAVPPFFGS, CSLLESLALSSNNFSGELPMDTLLK, MRGLKVLDLSFNEFSGELPESLTNL, ASLLTLDLSSNNFSGPILPNLCQN, KNTLQELYLQNNGFTGKIPPTLSNC, ELVSLHLSFNYLSGTIPSSLGSL, SKLRDLKLWLNMLEGEIPQELMYV, KTLETLILDFNDLTGEIPSGLSNC, NLNWISLSNNRLTGEIPKWIGRL, ENLAILKLSNNSFSGNIPAELGDC, and SLIWLDLNTNLFNGTIPAAMFKQ. A glycan (N-linked (GlcNAc...) asparagine) is linked at Asn112. Residue Asn154 is glycosylated (N-linked (GlcNAc...) asparagine). Asn233 carries N-linked (GlcNAc...) asparagine glycosylation. Asn275 is a glycosylation site (N-linked (GlcNAc...) asparagine). N-linked (GlcNAc...) asparagine glycosylation is found at Asn351, Asn387, Asn401, and Asn438. Residue Asn510 is glycosylated (N-linked (GlcNAc...) asparagine). 2 N-linked (GlcNAc...) asparagine glycosylation sites follow: Asn545 and Asn573. Tyr597 lines the brassinolide pocket. N-linked (GlcNAc...) asparagine glycosylation is present at Asn636. An SERK1 binding region spans residues 640-642; it reads RVY. Residues Tyr642 and Ser647 each contribute to the brassinolide site. N-linked (GlcNAc...) asparagine glycosylation is present at Asn653. LRR repeat units lie at residues 653-677, 678-701, 702-725, and 727-750; these read NGSMMFLDMSYNMLSGYIPKEIGSM, PYLFILNLGHNDISGSIPDEVGDL, RGLNILDLSSNKLDGRIPQAMSAL, and MLTEIDLSNNNLSGPIPEMGQFET. Asn705 lines the brassinolide pocket. The interval 726–729 is SERK1 binding; the sequence is TMLT. N-linked (GlcNAc...) asparagine glycosylation is present at Asn737. The SERK1 binding stretch occupies residues 746 to 750; the sequence is GQFET. Positions 763–770 match the Cys pair 2 motif; sequence CGYPLPRC. The helical transmembrane segment at 793–813 threads the bilayer; that stretch reads AGSVAMGLLFSFVCIFGLILV. Phosphotyrosine is present on Tyr831. Ser838 is subject to Phosphoserine. Phosphothreonine occurs at positions 842, 846, and 851. Ser858 is modified (phosphoserine). Phosphothreonine is present on residues Thr872 and Thr880. Residues 883 to 1158 form the Protein kinase domain; sequence FHNDSLIGSG…VQVMAMFKEI (276 aa). 2 positions are modified to phosphoserine: Ser887 and Ser891. Residues 889–897 and Lys911 contribute to the ATP site; that span reads IGSGGFGDV. Tyr956 carries the phosphotyrosine modification. ATP contacts are provided by residues 957 to 959 and 963 to 966; these read EFM and SLED. A Phosphoserine modification is found at Ser981. At Thr982 the chain carries Phosphothreonine. Catalysis depends on Asp1009, which acts as the Proton acceptor. ATP-binding positions include 1009 to 1014 and Asp1027; that span reads DMKSSN. At Ser1035 the chain carries Phosphoserine. Thr1039 bears the Phosphothreonine mark. A phosphoserine mark is found at Ser1042 and Ser1044. Phosphothreonine is present on residues Thr1045 and Thr1049. Phosphotyrosine is present on Tyr1052. Residue Ser1060 is modified to Phosphoserine. Residue Tyr1072 is modified to Phosphotyrosine. Ser1166 and Ser1168 each carry phosphoserine. Thr1169 carries the post-translational modification Phosphothreonine. Phosphoserine occurs at positions 1172 and 1179. Phosphothreonine is present on Thr1180. Ser1187 carries the phosphoserine modification.

It belongs to the protein kinase superfamily. Ser/Thr protein kinase family. As to quaternary structure, monomer or homodimer in the plasma membrane. Heterodimer with BAK1 in the endosomes. Interacts with SERK1 and TTL in a kinase-dependent manner. Bind to SERK1 in a brassinolide-dependent manner. Component of the SERK1 signaling complex, composed of KAPP, CDC48A, GRF6 or GRF7, SERK1, SERK2, SERK3/BAK1 and BRI1. Interacts with CDG1. No interactions with PSKR1 or CNGC17. Interacts with BIK1. Interacts with B'ALPHA, B'BETA, B'GAMMA and B'ETA. Interacts with BSK1 and BSK3. Interacts with BSK5, BSK6 and BSK11. Post-translationally, autophosphorylated on Tyr-831, Tyr-956 and maybe Tyr-1072. Phosphorylated on at least 12 sites, with a preference for Ser residues. Transphosphorylated on Ser-887 by SERK1 and on Ser-838, Thr-846, Ser-858 and Ser-1166 by BAK1. Phosphorylation on Ser-1166 enhances the kinase activity. Glycosylated. In terms of tissue distribution, expressed ubiquitously.

Its subcellular location is the cell membrane. The protein localises to the endosome membrane. The enzyme catalyses L-seryl-[protein] + ATP = O-phospho-L-seryl-[protein] + ADP + H(+). It carries out the reaction L-threonyl-[protein] + ATP = O-phospho-L-threonyl-[protein] + ADP + H(+). The catalysed reaction is L-tyrosyl-[protein] + ATP = O-phospho-L-tyrosyl-[protein] + ADP + H(+). With respect to regulation, activated by Ser and Thr phosphorylation. Functionally, receptor with a dual specificity kinase activity acting on both serine/threonine- and tyrosine-containing substrates. Regulates, in response to brassinosteroid binding, a signaling cascade involved in plant development, including expression of light- and stress-regulated genes, promotion of cell elongation, normal leaf and chloroplast senescence, and flowering. Binds brassinolide (BL), and less effectively castasterone (CS), but not 2,3,22,23-O-tetramethylbrassinolide or ecdysone. May be involved in a feedback regulation of brassinosteroid biosynthesis. Phosphorylates BRI1-associated receptor kinase 1 (BAK1), Transthyretin-Like protein (TTL) and SERK1 on 'Ser-299' and 'Thr-462' in vitro. May have a guanylyl cyclase activity. Phosphorylates BSK1, BSK2 and BSK3 in vitro. Phosphorylates BSK1, BSK3, BSK5, BSK6, BSK8 and BSK11 in vitro. In Arabidopsis thaliana (Mouse-ear cress), this protein is Protein BRASSINOSTEROID INSENSITIVE 1.